A 189-amino-acid polypeptide reads, in one-letter code: MKRVLFFLLMIFVSFGVIADCEIQAKDHDCFTIFAKGTIFSAFPVLNNKAMWRWYQNEDIGEYYWQTELGTCKNNKFTPSGARLLIRVGSLRLNENHAIKGTLQELINTAEKTAFLGDRFRSYIRAGIYQKKSSDPVQLLAVLDNSIMVKYFKDEKPTYARMTAHLPNKNESYECLIKIQHELIRSEEK.

The N-terminal stretch at 1–19 (MKRVLFFLLMIFVSFGVIA) is a signal peptide.

This is an uncharacterized protein from Escherichia coli (strain K12).